The following is a 554-amino-acid chain: CTP synthase (554 aa).

The tract at residues Met-1–Leu-265 is amidoligase domain. Ser-13 contacts CTP. Ser-13 is a binding site for UTP. ATP is bound by residues Ser-14 to Ile-19 and Asp-71. Residues Asp-71 and Glu-139 each contribute to the Mg(2+) site. CTP-binding positions include Asp-146 to Glu-148, Lys-186 to Gln-191, and Lys-222. UTP contacts are provided by residues Lys-186 to Gln-191 and Lys-222. A Glutamine amidotransferase type-1 domain is found at Thr-292–Gly-545. Gly-353 provides a ligand contact to L-glutamine. Catalysis depends on Cys-380, which acts as the Nucleophile; for glutamine hydrolysis. L-glutamine contacts are provided by residues Tyr-381–Gln-384, Glu-404, and Arg-471. Active-site residues include His-518 and Glu-520.

Belongs to the CTP synthase family. As to quaternary structure, homotetramer.

The catalysed reaction is UTP + L-glutamine + ATP + H2O = CTP + L-glutamate + ADP + phosphate + 2 H(+). The enzyme catalyses L-glutamine + H2O = L-glutamate + NH4(+). It catalyses the reaction UTP + NH4(+) + ATP = CTP + ADP + phosphate + 2 H(+). The protein operates within pyrimidine metabolism; CTP biosynthesis via de novo pathway; CTP from UDP: step 2/2. Its activity is regulated as follows. Allosterically activated by GTP, when glutamine is the substrate; GTP has no effect on the reaction when ammonia is the substrate. The allosteric effector GTP functions by stabilizing the protein conformation that binds the tetrahedral intermediate(s) formed during glutamine hydrolysis. Inhibited by the product CTP, via allosteric rather than competitive inhibition. Its function is as follows. Catalyzes the ATP-dependent amination of UTP to CTP with either L-glutamine or ammonia as the source of nitrogen. Regulates intracellular CTP levels through interactions with the four ribonucleotide triphosphates. The protein is CTP synthase of Stenotrophomonas maltophilia (strain R551-3).